Consider the following 1078-residue polypeptide: DNA gyrase subunit B (1078 aa).

A Toprim domain is found at 889 to 974 (GKILNIEKTD…QGYIYIACPP (86 aa)). The Mg(2+) site is built by glutamate 895, aspartate 939, and aspartate 941.

Belongs to the type II topoisomerase GyrB family. As to quaternary structure, heterotetramer, composed of two GyrA and two GyrB chains. In the heterotetramer, GyrA contains the active site tyrosine that forms a transient covalent intermediate with DNA, while GyrB binds cofactors and catalyzes ATP hydrolysis. Mg(2+) serves as cofactor. Post-translationally, this protein undergoes a protein self splicing that involves a post-translational excision of the intervening region (intein) followed by peptide ligation.

The protein resides in the cytoplasm. It carries out the reaction ATP-dependent breakage, passage and rejoining of double-stranded DNA.. In terms of biological role, a type II topoisomerase that negatively supercoils closed circular double-stranded (ds) DNA in an ATP-dependent manner to modulate DNA topology and maintain chromosomes in an underwound state. Negative supercoiling favors strand separation, and DNA replication, transcription, recombination and repair, all of which involve strand separation. Also able to catalyze the interconversion of other topological isomers of dsDNA rings, including catenanes and knotted rings. Type II topoisomerases break and join 2 DNA strands simultaneously in an ATP-dependent manner. In Synechocystis sp. (strain ATCC 27184 / PCC 6803 / Kazusa), this protein is DNA gyrase subunit B (gyrB).